The sequence spans 428 residues: Adenylosuccinate synthetase (428 aa).

GTP contacts are provided by residues 12–18 (GDEGKGK) and 40–42 (GHT). Aspartate 13 acts as the Proton acceptor in catalysis. Positions 13 and 40 each coordinate Mg(2+). Residues 13–16 (DEGK), 38–41 (NAGH), threonine 130, arginine 144, glutamine 225, threonine 240, and arginine 304 contribute to the IMP site. Histidine 41 functions as the Proton donor in the catalytic mechanism. Position 300–306 (300–306 (VTTGRSR)) interacts with substrate. Residues arginine 306, 332–334 (KID), and 414–416 (GVG) each bind GTP.

The protein belongs to the adenylosuccinate synthetase family. In terms of assembly, homodimer. It depends on Mg(2+) as a cofactor.

It localises to the cytoplasm. It catalyses the reaction IMP + L-aspartate + GTP = N(6)-(1,2-dicarboxyethyl)-AMP + GDP + phosphate + 2 H(+). Its pathway is purine metabolism; AMP biosynthesis via de novo pathway; AMP from IMP: step 1/2. Its function is as follows. Plays an important role in the de novo pathway of purine nucleotide biosynthesis. Catalyzes the first committed step in the biosynthesis of AMP from IMP. The chain is Adenylosuccinate synthetase from Clostridium botulinum (strain Eklund 17B / Type B).